The chain runs to 698 residues: Elongation factor G (698 aa).

The tr-type G domain occupies 10 to 285 (DKTRNIGIMA…AVVDYLPSPL (276 aa)). Residues 19–26 (AHIDAGKT), 83–87 (DTPGH), and 137–140 (NKMD) contribute to the GTP site.

Belongs to the TRAFAC class translation factor GTPase superfamily. Classic translation factor GTPase family. EF-G/EF-2 subfamily.

It localises to the cytoplasm. Functionally, catalyzes the GTP-dependent ribosomal translocation step during translation elongation. During this step, the ribosome changes from the pre-translocational (PRE) to the post-translocational (POST) state as the newly formed A-site-bound peptidyl-tRNA and P-site-bound deacylated tRNA move to the P and E sites, respectively. Catalyzes the coordinated movement of the two tRNA molecules, the mRNA and conformational changes in the ribosome. The polypeptide is Elongation factor G (Lactiplantibacillus plantarum (strain ATCC BAA-793 / NCIMB 8826 / WCFS1) (Lactobacillus plantarum)).